Here is a 392-residue protein sequence, read N- to C-terminus: Phosphoglycerate kinase (392 aa).

Substrate is bound by residues 26-28 (DLN), Arg41, 64-67 (HLGR), Arg118, and Arg151. Residues Lys202, Glu319, and 345–348 (GGDT) contribute to the ATP site.

The protein belongs to the phosphoglycerate kinase family. As to quaternary structure, monomer.

The protein resides in the cytoplasm. It carries out the reaction (2R)-3-phosphoglycerate + ATP = (2R)-3-phospho-glyceroyl phosphate + ADP. The protein operates within carbohydrate degradation; glycolysis; pyruvate from D-glyceraldehyde 3-phosphate: step 2/5. The chain is Phosphoglycerate kinase from Photobacterium profundum (strain SS9).